An 83-amino-acid chain; its full sequence is Conotoxin Pu6.1 (83 aa).

The N-terminal stretch at 1–19 is a signal peptide; it reads MKLVLAIVLILMLVSLSTG. The propeptide occupies 20 to 42; it reads AEESGQEISMVGPPLYIWDPIPP. Cystine bridges form between Cys-43–Cys-57, Cys-50–Cys-62, and Cys-56–Cys-78.

The protein belongs to the conotoxin I3 superfamily. Expressed by the venom duct.

Its subcellular location is the secreted. This chain is Conotoxin Pu6.1, found in Conus pulicarius (Flea-bitten cone).